A 356-amino-acid polypeptide reads, in one-letter code: Tyrosine recombinase XerS (356 aa).

Positions 16–121 (LMPWFVLEYY…ALSCLYKYLT (106 aa)) constitute a Core-binding (CB) domain. The region spanning 169–354 (KFLDYVENEY…VNDEQKNALD (186 aa)) is the Tyr recombinase domain. Residues Arg-210, Lys-234, His-306, Arg-309, and His-332 contribute to the active site. Tyr-341 (O-(3'-phospho-DNA)-tyrosine intermediate) is an active-site residue.

It belongs to the 'phage' integrase family. XerS subfamily.

The protein resides in the cytoplasm. With respect to regulation, ftsK is required for recombination. In terms of biological role, site-specific tyrosine recombinase, which acts by catalyzing the cutting and rejoining of the recombining DNA molecules. Essential to convert dimers of the bacterial chromosome into monomers to permit their segregation at cell division. The sequence is that of Tyrosine recombinase XerS from Streptococcus thermophilus (strain ATCC BAA-250 / LMG 18311).